Here is a 137-residue protein sequence, read N- to C-terminus: Protein cornichon homolog 3 (137 aa).

3 helical membrane passes run 8-28, 54-74, and 113-133; these read IISF…LISL, ILQG…MALL, and LAYI…STLD.

The protein belongs to the cornichon family.

It is found in the membrane. This is Protein cornichon homolog 3 from Arabidopsis thaliana (Mouse-ear cress).